The sequence spans 178 residues: CASP-like protein 5A1 (178 aa).

Residues M1–V11 are compositionally biased toward low complexity. The segment at M1–G25 is disordered. Residues M1–T37 are Cytoplasmic-facing. The chain crosses the membrane as a helical span at residues A38–M58. Residues A59–S69 lie on the Extracellular side of the membrane. The helical transmembrane segment at F70–V90 threads the bilayer. Topologically, residues D91 to R105 are cytoplasmic. Residues A106–C126 traverse the membrane as a helical segment. Topologically, residues A127–S152 are extracellular. Residues A153–W173 traverse the membrane as a helical segment. Over S174 to G178 the chain is Cytoplasmic.

This sequence belongs to the Casparian strip membrane proteins (CASP) family. Homodimer and heterodimers.

Its subcellular location is the cell membrane. In Oryza sativa subsp. japonica (Rice), this protein is CASP-like protein 5A1.